The primary structure comprises 157 residues: SsrA-binding protein (157 aa).

Positions K136–R151 are enriched in basic and acidic residues. The disordered stretch occupies residues K136–S157.

This sequence belongs to the SmpB family.

It localises to the cytoplasm. Its function is as follows. Required for rescue of stalled ribosomes mediated by trans-translation. Binds to transfer-messenger RNA (tmRNA), required for stable association of tmRNA with ribosomes. tmRNA and SmpB together mimic tRNA shape, replacing the anticodon stem-loop with SmpB. tmRNA is encoded by the ssrA gene; the 2 termini fold to resemble tRNA(Ala) and it encodes a 'tag peptide', a short internal open reading frame. During trans-translation Ala-aminoacylated tmRNA acts like a tRNA, entering the A-site of stalled ribosomes, displacing the stalled mRNA. The ribosome then switches to translate the ORF on the tmRNA; the nascent peptide is terminated with the 'tag peptide' encoded by the tmRNA and targeted for degradation. The ribosome is freed to recommence translation, which seems to be the essential function of trans-translation. This is SsrA-binding protein from Cereibacter sphaeroides (strain ATCC 17029 / ATH 2.4.9) (Rhodobacter sphaeroides).